A 247-amino-acid chain; its full sequence is Adenosylcobinamide-GDP ribazoletransferase (247 aa).

Helical transmembrane passes span 34-54, 59-79, 113-133, 138-158, 171-193, and 197-219; these read IVMF…IFIL, CGIP…TGGF, GGLA…ELAL, MLAA…LLMY, VFIG…IIAT, and PGMQ…GQLL.

Belongs to the CobS family. Requires Mg(2+) as cofactor.

Its subcellular location is the cell inner membrane. It catalyses the reaction alpha-ribazole + adenosylcob(III)inamide-GDP = adenosylcob(III)alamin + GMP + H(+). It carries out the reaction alpha-ribazole 5'-phosphate + adenosylcob(III)inamide-GDP = adenosylcob(III)alamin 5'-phosphate + GMP + H(+). The protein operates within cofactor biosynthesis; adenosylcobalamin biosynthesis; adenosylcobalamin from cob(II)yrinate a,c-diamide: step 7/7. Its function is as follows. Joins adenosylcobinamide-GDP and alpha-ribazole to generate adenosylcobalamin (Ado-cobalamin). Also synthesizes adenosylcobalamin 5'-phosphate from adenosylcobinamide-GDP and alpha-ribazole 5'-phosphate. This Salmonella newport (strain SL254) protein is Adenosylcobinamide-GDP ribazoletransferase.